A 424-amino-acid polypeptide reads, in one-letter code: 5-methylthioadenosine/S-adenosylhomocysteine deaminase (424 aa).

2 residues coordinate Zn(2+): H60 and H62. Residues E89 and H181 each coordinate substrate. Zn(2+) is bound at residue H208. 2 residues coordinate substrate: E211 and D296. D296 contributes to the Zn(2+) binding site.

It belongs to the metallo-dependent hydrolases superfamily. MTA/SAH deaminase family. Zn(2+) is required as a cofactor.

The enzyme catalyses S-adenosyl-L-homocysteine + H2O + H(+) = S-inosyl-L-homocysteine + NH4(+). It carries out the reaction S-methyl-5'-thioadenosine + H2O + H(+) = S-methyl-5'-thioinosine + NH4(+). Its function is as follows. Catalyzes the deamination of 5-methylthioadenosine and S-adenosyl-L-homocysteine into 5-methylthioinosine and S-inosyl-L-homocysteine, respectively. Is also able to deaminate adenosine. This Thermococcus kodakarensis (strain ATCC BAA-918 / JCM 12380 / KOD1) (Pyrococcus kodakaraensis (strain KOD1)) protein is 5-methylthioadenosine/S-adenosylhomocysteine deaminase.